The chain runs to 298 residues: N-acetylmuramic acid 6-phosphate etherase (298 aa).

The region spanning 55-218 is the SIS domain; the sequence is IHAQVSGGGR…STGLMIKSGK (164 aa). Glutamate 83 serves as the catalytic Proton donor. Residue glutamate 114 is part of the active site.

Belongs to the GCKR-like family. MurNAc-6-P etherase subfamily. In terms of assembly, homodimer.

The enzyme catalyses N-acetyl-D-muramate 6-phosphate + H2O = N-acetyl-D-glucosamine 6-phosphate + (R)-lactate. It participates in amino-sugar metabolism; 1,6-anhydro-N-acetylmuramate degradation. It functions in the pathway amino-sugar metabolism; N-acetylmuramate degradation. The protein operates within cell wall biogenesis; peptidoglycan recycling. Its function is as follows. Specifically catalyzes the cleavage of the D-lactyl ether substituent of MurNAc 6-phosphate, producing GlcNAc 6-phosphate and D-lactate. Together with AnmK, is also required for the utilization of anhydro-N-acetylmuramic acid (anhMurNAc) either imported from the medium or derived from its own cell wall murein, and thus plays a role in cell wall recycling. The protein is N-acetylmuramic acid 6-phosphate etherase of Shigella flexneri.